Reading from the N-terminus, the 295-residue chain is Nucleotide-binding protein CMS1991 (295 aa).

19-26 (GMSGAGRS) is an ATP binding site. 70-73 (DVRG) provides a ligand contact to GTP.

It belongs to the RapZ-like family.

Functionally, displays ATPase and GTPase activities. The sequence is that of Nucleotide-binding protein CMS1991 from Clavibacter sepedonicus (Clavibacter michiganensis subsp. sepedonicus).